The chain runs to 497 residues: Putative endothelial lipase (497 aa).

Positions Met-1–Ala-23 are cleaved as a signal peptide. Residues Cys-73 and Cys-86 are joined by a disulfide bond. Residues Asn-89 and Asn-145 are each glycosylated (N-linked (GlcNAc...) asparagine). Ser-178 (nucleophile) is an active-site residue. Asp-202 serves as the catalytic Charge relay system. Residues Cys-262 and Cys-282 are joined by a disulfide bond. The active-site Charge relay system is the His-284. Intrachain disulfides connect Cys-307-Cys-326 and Cys-318-Cys-321. Lys-335–Lys-347 contacts heparin. In terms of domain architecture, PLAT spans Phe-357–His-492. Asn-403 carries N-linked (GlcNAc...) asparagine glycosylation.

It belongs to the AB hydrolase superfamily. Lipase family. As to quaternary structure, head to tail homodimer. Expressed by the venom gland.

Its subcellular location is the secreted. It catalyses the reaction a triacylglycerol + H2O = a diacylglycerol + a fatty acid + H(+). Inhibited by serum. Its function is as follows. Has phospholipase and triglyceride lipase activities. The polypeptide is Putative endothelial lipase (Crotalus adamanteus (Eastern diamondback rattlesnake)).